Consider the following 93-residue polypeptide: Transcription factor RADIALIS (93 aa).

The SANT domain maps to 6–61 (GSGRPWSAKENKAFERALAVYDKDTPDRWANVARAVEGRTPEEVKKHYEILVEDIK).

As to expression, specifically expressed in the dorsal region of developing flowers.

It localises to the nucleus. Its function is as follows. Involved in the dorsovental asymmetry of flowers. Promotes dorsal identity. The polypeptide is Transcription factor RADIALIS (RAD) (Antirrhinum majus (Garden snapdragon)).